A 162-amino-acid chain; its full sequence is Small ribosomal subunit protein uS19 (162 aa).

Positions 1 to 27 are enriched in basic residues; it reads MAKQKKFSGKGSARSKRKQNRKQVGPR. The segment at 1–29 is disordered; sequence MAKQKKFSGKGSARSKRKQNRKQVGPRRR.

This sequence belongs to the universal ribosomal protein uS19 family.

In terms of biological role, protein S19 forms a complex with S13 that binds strongly to the 16S ribosomal RNA. This Methanococcus aeolicus (strain ATCC BAA-1280 / DSM 17508 / OCM 812 / Nankai-3) protein is Small ribosomal subunit protein uS19.